A 139-amino-acid chain; its full sequence is Putative pre-16S rRNA nuclease (139 aa).

It belongs to the YqgF nuclease family.

Its subcellular location is the cytoplasm. Could be a nuclease involved in processing of the 5'-end of pre-16S rRNA. The polypeptide is Putative pre-16S rRNA nuclease (Streptococcus pyogenes serotype M1).